A 151-amino-acid chain; its full sequence is Small ribosomal subunit protein uS19 (151 aa).

A2 is modified (N-acetylalanine).

The protein belongs to the universal ribosomal protein uS19 family.

Its function is as follows. Negatively regulates lifespan. This Caenorhabditis elegans protein is Small ribosomal subunit protein uS19.